Consider the following 159-residue polypeptide: Ribosomal RNA large subunit methyltransferase H (159 aa).

Positions 76 and 108 each coordinate S-adenosyl-L-methionine.

Belongs to the RNA methyltransferase RlmH family. In terms of assembly, homodimer.

The protein resides in the cytoplasm. The catalysed reaction is pseudouridine(1915) in 23S rRNA + S-adenosyl-L-methionine = N(3)-methylpseudouridine(1915) in 23S rRNA + S-adenosyl-L-homocysteine + H(+). Its function is as follows. Specifically methylates the pseudouridine at position 1915 (m3Psi1915) in 23S rRNA. The polypeptide is Ribosomal RNA large subunit methyltransferase H (Limosilactobacillus fermentum (strain NBRC 3956 / LMG 18251) (Lactobacillus fermentum)).